Consider the following 447-residue polypeptide: Argininosuccinate synthase (447 aa).

ATP is bound by residues 17-25 and alanine 43; that span reads AFSGGLDTS. An L-citrulline-binding site is contributed by tyrosine 99. ATP contacts are provided by glycine 129 and threonine 131. Residues threonine 131, asparagine 135, and aspartate 136 each contribute to the L-aspartate site. Asparagine 135 is a binding site for L-citrulline. An ATP-binding site is contributed by aspartate 136. Positions 139 and 192 each coordinate L-citrulline. Aspartate 194 provides a ligand contact to ATP. Threonine 201, glutamate 203, and glutamate 280 together coordinate L-citrulline.

It belongs to the argininosuccinate synthase family. Type 2 subfamily. As to quaternary structure, homotetramer.

The protein localises to the cytoplasm. It carries out the reaction L-citrulline + L-aspartate + ATP = 2-(N(omega)-L-arginino)succinate + AMP + diphosphate + H(+). It functions in the pathway amino-acid biosynthesis; L-arginine biosynthesis; L-arginine from L-ornithine and carbamoyl phosphate: step 2/3. The chain is Argininosuccinate synthase from Shigella dysenteriae serotype 1 (strain Sd197).